The chain runs to 205 residues: Adenylyl-sulfate kinase (205 aa).

31–38 (GLSGAGKS) is a binding site for ATP. Catalysis depends on Ser-105, which acts as the Phosphoserine intermediate.

It belongs to the APS kinase family.

The catalysed reaction is adenosine 5'-phosphosulfate + ATP = 3'-phosphoadenylyl sulfate + ADP + H(+). Its pathway is sulfur metabolism; hydrogen sulfide biosynthesis; sulfite from sulfate: step 2/3. In terms of biological role, catalyzes the synthesis of activated sulfate. The sequence is that of Adenylyl-sulfate kinase from Shewanella baltica (strain OS223).